The sequence spans 476 residues: Aspartyl/glutamyl-tRNA(Asn/Gln) amidotransferase subunit B (476 aa).

This sequence belongs to the GatB/GatE family. GatB subfamily. In terms of assembly, heterotrimer of A, B and C subunits.

It carries out the reaction L-glutamyl-tRNA(Gln) + L-glutamine + ATP + H2O = L-glutaminyl-tRNA(Gln) + L-glutamate + ADP + phosphate + H(+). The enzyme catalyses L-aspartyl-tRNA(Asn) + L-glutamine + ATP + H2O = L-asparaginyl-tRNA(Asn) + L-glutamate + ADP + phosphate + 2 H(+). Its function is as follows. Allows the formation of correctly charged Asn-tRNA(Asn) or Gln-tRNA(Gln) through the transamidation of misacylated Asp-tRNA(Asn) or Glu-tRNA(Gln) in organisms which lack either or both of asparaginyl-tRNA or glutaminyl-tRNA synthetases. The reaction takes place in the presence of glutamine and ATP through an activated phospho-Asp-tRNA(Asn) or phospho-Glu-tRNA(Gln). This chain is Aspartyl/glutamyl-tRNA(Asn/Gln) amidotransferase subunit B, found in Clostridium botulinum (strain Loch Maree / Type A3).